The primary structure comprises 94 residues: UPF0381 protein YfcZ (94 aa).

This sequence belongs to the UPF0381 family.

In Escherichia coli O6:H1 (strain CFT073 / ATCC 700928 / UPEC), this protein is UPF0381 protein YfcZ (yfcZ).